A 330-amino-acid chain; its full sequence is MDIRSDDAKKPMMMWFLGMLLFSMVAESNAQLSENYYASTCPSVELIVKQAVTTKFKQTVTTAPATLRMFFHDCFVEGCDASVFIASENEDAEKDADDNKSLAGDGFDTVIKAKTAVESQCPGVVSCADILALAARDVVVLVGGPEFKVELGRRDGLVSKASRVTGKLPEPGLDVRGLVQIFASNGLSLTDMIALSGAHTIGSSHCNRFANRLHNFSTFMPVDPTMDPVYAQQLIQACSDPNPDAVVDIDLTSRDTFDNSYYQNLVARKGLFTSDQALFNDLSSQATVVRFANNAEEFYSAFSSAMRNLGRVGVKVGNQGEIRRDCSAFN.

An N-terminal signal peptide occupies residues 1–30; the sequence is MDIRSDDAKKPMMMWFLGMLLFSMVAESNA. 4 disulfide bridges follow: cysteine 41/cysteine 121, cysteine 74/cysteine 79, cysteine 127/cysteine 326, and cysteine 206/cysteine 238. Histidine 72 functions as the Proton acceptor in the catalytic mechanism. Positions 73, 76, 78, 80, and 82 each coordinate Ca(2+). Proline 169 is a binding site for substrate. Histidine 199 is a heme b binding site. Threonine 200 is a binding site for Ca(2+). Asparagine 215 carries N-linked (GlcNAc...) asparagine glycosylation. 3 residues coordinate Ca(2+): aspartate 250, serine 253, and aspartate 258.

This sequence belongs to the peroxidase family. Classical plant (class III) peroxidase subfamily. The cofactor is heme b. Ca(2+) is required as a cofactor. In terms of tissue distribution, slightly expressed in roots.

The protein resides in the secreted. It carries out the reaction 2 a phenolic donor + H2O2 = 2 a phenolic radical donor + 2 H2O. Its function is as follows. Removal of H(2)O(2), oxidation of toxic reductants, biosynthesis and degradation of lignin, suberization, auxin catabolism, response to environmental stresses such as wounding, pathogen attack and oxidative stress. These functions might be dependent on each isozyme/isoform in each plant tissue. The protein is Peroxidase 55 (PER55) of Arabidopsis thaliana (Mouse-ear cress).